Here is a 418-residue protein sequence, read N- to C-terminus: Creatine kinase U-type, mitochondrial (418 aa).

The transit peptide at Met-1–Ala-39 directs the protein to the mitochondrion. A cardiolipin-binding region spans residues Ala-40 to Met-64. One can recognise a Phosphagen kinase N-terminal domain in the interval Arg-46–Asn-132. A Phosphoserine modification is found at Ser-152. In terms of domain architecture, Phosphagen kinase C-terminal spans Tyr-159–Leu-401. Ser-162–Arg-166 lines the ATP pocket. Ser-197 is modified (phosphoserine). Position 214 is a phosphothreonine (Thr-214). Position 225 (His-225) interacts with ATP. Ser-233 is subject to Phosphoserine. Residues Arg-270, Arg-326, and Arg-354–Val-359 each bind ATP. Phosphothreonine is present on Thr-356. Ser-366 bears the Phosphoserine mark. Asp-369 is an ATP binding site.

The protein belongs to the ATP:guanido phosphotransferase family. In terms of assembly, exists as an octamer composed of four MTCK homodimers.

The protein localises to the mitochondrion inner membrane. It catalyses the reaction creatine + ATP = N-phosphocreatine + ADP + H(+). Functionally, reversibly catalyzes the transfer of phosphate between ATP and various phosphogens (e.g. creatine phosphate). Creatine kinase isoenzymes play a central role in energy transduction in tissues with large, fluctuating energy demands, such as skeletal muscle, heart, brain and spermatozoa. The sequence is that of Creatine kinase U-type, mitochondrial (Ckmt1) from Mus musculus (Mouse).